Consider the following 716-residue polypeptide: DNA ligase (716 aa).

NAD(+) contacts are provided by residues 49-53, 98-99, and Glu131; these read DAEYD and SL. The N6-AMP-lysine intermediate role is filled by Lys133. Arg154, Glu191, Lys308, and Lys332 together coordinate NAD(+). 4 residues coordinate Zn(2+): Cys437, Cys439, Cys461, and Cys467. The BRCT domain occupies 638 to 716; the sequence is KRHSPIATKT…EDEWLQLIAE (79 aa).

The protein belongs to the NAD-dependent DNA ligase family. LigA subfamily. Mg(2+) is required as a cofactor. Mn(2+) serves as cofactor.

It catalyses the reaction NAD(+) + (deoxyribonucleotide)n-3'-hydroxyl + 5'-phospho-(deoxyribonucleotide)m = (deoxyribonucleotide)n+m + AMP + beta-nicotinamide D-nucleotide.. In terms of biological role, DNA ligase that catalyzes the formation of phosphodiester linkages between 5'-phosphoryl and 3'-hydroxyl groups in double-stranded DNA using NAD as a coenzyme and as the energy source for the reaction. It is essential for DNA replication and repair of damaged DNA. The sequence is that of DNA ligase from Bradyrhizobium sp. (strain BTAi1 / ATCC BAA-1182).